The following is a 508-amino-acid chain: Phosphoglycerate kinase A (508 aa).

(2R)-3-phosphoglycerate-binding residues include Val32, Asp33, Phe34, Asn35, Arg48, Ser70, His71, Gly73, Arg74, Arg224, His260, and Arg261. ADP-binding residues include Gly306 and Ala307. Gly306 lines the CDP pocket. Residues Ala307 and Lys308 each contribute to the AMP site. Ala307 contacts ATP. Ala307 contributes to the Mg(2+) binding site. A (2R)-3-phosphoglycerate-binding site is contributed by Lys308. A CDP-binding site is contributed by Glu311. Position 311 (Glu311) interacts with Mg(2+). ADP is bound by residues Lys312 and Gly330. Residue Lys312 coordinates AMP. Lys312 provides a ligand contact to ATP. Gly330 lines the CDP pocket. AMP contacts are provided by Ala331 and Ala403. ATP is bound by residues Ala331 and Ala403. ADP contacts are provided by Ala403 and Asn427. Gly428 and Phe433 together coordinate CDP. The ADP site is built by Phe433, Glu434, Glu466, and Ser467. AMP is bound at residue Glu434. Residues Glu434, Glu466, and Ser467 each coordinate ATP. Position 466 (Glu466) interacts with Mg(2+).

It belongs to the phosphoglycerate kinase family. Monomer. Mg(2+) is required as a cofactor.

It carries out the reaction (2R)-3-phosphoglycerate + ATP = (2R)-3-phospho-glyceroyl phosphate + ADP. It functions in the pathway carbohydrate degradation; glycolysis; pyruvate from D-glyceraldehyde 3-phosphate: step 2/5. This is Phosphoglycerate kinase A from Trypanosoma brucei brucei.